Reading from the N-terminus, the 269-residue chain is GTP cyclohydrolase FolE2 (269 aa).

Belongs to the GTP cyclohydrolase IV family.

It catalyses the reaction GTP + H2O = 7,8-dihydroneopterin 3'-triphosphate + formate + H(+). It participates in cofactor biosynthesis; 7,8-dihydroneopterin triphosphate biosynthesis; 7,8-dihydroneopterin triphosphate from GTP: step 1/1. In terms of biological role, converts GTP to 7,8-dihydroneopterin triphosphate. The chain is GTP cyclohydrolase FolE2 from Burkholderia mallei (strain NCTC 10229).